Consider the following 393-residue polypeptide: S-adenosylmethionine synthase 2 (393 aa).

Position 9 (glutamate 9) interacts with Mg(2+). Histidine 15 contacts ATP. Position 43 (glutamate 43) interacts with K(+). 2 residues coordinate L-methionine: glutamate 56 and glutamine 99. ATP contacts are provided by residues 167–169, 235–238, aspartate 246, 252–253, alanine 269, lysine 273, and lysine 277; these read DGK, SGRF, and RM. An L-methionine-binding site is contributed by aspartate 246. Position 277 (lysine 277) interacts with L-methionine.

Belongs to the AdoMet synthase family. As to quaternary structure, homotetramer. Mn(2+) is required as a cofactor. The cofactor is Mg(2+). Requires Co(2+) as cofactor. K(+) serves as cofactor.

The protein resides in the cytoplasm. It carries out the reaction L-methionine + ATP + H2O = S-adenosyl-L-methionine + phosphate + diphosphate. The protein operates within amino-acid biosynthesis; S-adenosyl-L-methionine biosynthesis; S-adenosyl-L-methionine from L-methionine: step 1/1. Functionally, catalyzes the formation of S-adenosylmethionine from methionine and ATP. The reaction comprises two steps that are both catalyzed by the same enzyme: formation of S-adenosylmethionine (AdoMet) and triphosphate, and subsequent hydrolysis of the triphosphate. The sequence is that of S-adenosylmethionine synthase 2 (SAMS2) from Daucus carota (Wild carrot).